The following is a 152-amino-acid chain: UPF0735 ACT domain-containing protein SAS1579 (152 aa).

One can recognise an ACT domain in the interval 75–150 (TLILYVTDIV…YVSKVELISM (76 aa)).

This sequence belongs to the UPF0735 family.

This Staphylococcus aureus (strain MSSA476) protein is UPF0735 ACT domain-containing protein SAS1579.